The sequence spans 906 residues: Protein translocase subunit SecA (906 aa).

ATP-binding positions include Q89, 107 to 111 (GEGKT), and D502. Residues C890, C892, C901, and H902 each contribute to the Zn(2+) site.

It belongs to the SecA family. Monomer and homodimer. Part of the essential Sec protein translocation apparatus which comprises SecA, SecYEG and auxiliary proteins SecDF-YajC and YidC. Zn(2+) serves as cofactor.

It is found in the cell inner membrane. It localises to the cytoplasm. It catalyses the reaction ATP + H2O + cellular proteinSide 1 = ADP + phosphate + cellular proteinSide 2.. Its function is as follows. Part of the Sec protein translocase complex. Interacts with the SecYEG preprotein conducting channel. Has a central role in coupling the hydrolysis of ATP to the transfer of proteins into and across the cell membrane, serving both as a receptor for the preprotein-SecB complex and as an ATP-driven molecular motor driving the stepwise translocation of polypeptide chains across the membrane. In Bartonella quintana (strain Toulouse) (Rochalimaea quintana), this protein is Protein translocase subunit SecA.